The chain runs to 193 residues: Ribosomal RNA small subunit methyltransferase G (193 aa).

S-adenosyl-L-methionine is bound by residues G61, L66, I112–E113, and R126.

This sequence belongs to the methyltransferase superfamily. RNA methyltransferase RsmG family.

Its subcellular location is the cytoplasm. It catalyses the reaction guanosine(527) in 16S rRNA + S-adenosyl-L-methionine = N(7)-methylguanosine(527) in 16S rRNA + S-adenosyl-L-homocysteine. Functionally, specifically methylates the N7 position of guanine in position 527 of 16S rRNA. The chain is Ribosomal RNA small subunit methyltransferase G from Paracoccus denitrificans (strain Pd 1222).